The following is a 167-amino-acid chain: Arginine repressor (167 aa).

Belongs to the ArgR family.

The protein localises to the cytoplasm. It functions in the pathway amino-acid biosynthesis; L-arginine biosynthesis [regulation]. Its function is as follows. Regulates arginine biosynthesis genes. This Mycobacterium leprae (strain Br4923) protein is Arginine repressor.